We begin with the raw amino-acid sequence, 506 residues long: Dipeptide and tripeptide permease A (506 aa).

The Cytoplasmic portion of the chain corresponds to M1–R36. A helical membrane pass occupies residues F37–S57. At E58 to S61 the chain is on the periplasmic side. The helical transmembrane segment at I62–L82 threads the bilayer. The Cytoplasmic segment spans residues G83 to R91. 2 helical membrane passes run V92–H112 and S113–A133. Over N134–T155 the chain is Cytoplasmic. Residues M156 to A176 form a helical membrane-spanning segment. Over A177–G180 the chain is Periplasmic. A helical membrane pass occupies residues W181–F201. The Cytoplasmic portion of the chain corresponds to C202–K222. Residues L223–N243 traverse the membrane as a helical segment. Topologically, residues Q244–R248 are periplasmic. Residues W249–V269 form a helical membrane-spanning segment. Topologically, residues S270–K276 are cytoplasmic. The helical transmembrane segment at M277 to M297 threads the bilayer. The Periplasmic segment spans residues P298–Q322. The helical transmembrane segment at Y323–N343 threads the bilayer. Residues K344–K354 lie on the Cytoplasmic side of the membrane. The helical transmembrane segment at F355–M375 threads the bilayer. Topologically, residues A376–N385 are periplasmic. The chain crosses the membrane as a helical span at residues W386 to L406. The Cytoplasmic portion of the chain corresponds to A407–R416. The helical transmembrane segment at L417–G437 threads the bilayer. The Periplasmic segment spans residues Y438–N461. The chain crosses the membrane as a helical span at residues V462–P482. Topologically, residues K483–A506 are cytoplasmic.

Belongs to the major facilitator superfamily. Proton-dependent oligopeptide transporter (POT/PTR) (TC 2.A.17) family. DtpA subfamily.

It is found in the cell inner membrane. In terms of biological role, proton-dependent permease that transports di- and tripeptides. The protein is Dipeptide and tripeptide permease A of Pectobacterium carotovorum subsp. carotovorum (strain PC1).